Consider the following 174-residue polypeptide: 2-hydroxy-palmitic acid dioxygenase MPO1 (174 aa).

The Cytoplasmic portion of the chain corresponds to 1 to 23 (MGEGLLDLRSQLGFYKFYHHNPK). Residues 24–44 (NVLIHSIFVPTILFSGSCMLH) traverse the membrane as a helical segment. Residues 45–63 (RVKIYQSISLTAVLSVLFS) lie on the Lumenal side of the membrane. The helical transmembrane segment at 64–84 (IFYCLLYLPTGLLAGVLLLLL) threads the bilayer. Over 85 to 98 (NLALIDHRVDLTFK) the chain is Cytoplasmic. A helical membrane pass occupies residues 99 to 119 (QELGLFTIGWIFQFVGHGVFE). The Lumenal portion of the chain corresponds to 120–131 (KRRPALIDNLVQ). A helical membrane pass occupies residues 132 to 152 (SLVLAPYFIMFEFLFKLGFMP). The Cytoplasmic segment spans residues 153–174 (RLKATLEHDLEIKQRNLRMQRQ).

It belongs to the MPO1 family. Fe(2+) is required as a cofactor.

The protein localises to the endoplasmic reticulum membrane. The catalysed reaction is (R)-2-hydroxyhexadecanoate + O2 = pentadecanoate + CO2 + H2O. In terms of biological role, dioxygenase that catalyzes the alpha-oxidation of 2-hydroxy fatty acids in an iron-dependent manner. Involved in metabolism of phytosphingosine and is required for proper endoplasmic reticulum stress response. This chain is 2-hydroxy-palmitic acid dioxygenase MPO1, found in Saccharomyces cerevisiae (strain ATCC 204508 / S288c) (Baker's yeast).